A 44-amino-acid chain; its full sequence is Capsid protein G8P (44 aa).

Residue S1 is modified to N-acetylserine; by host. Residues 1–19 (SGVGDGVDVVSAIEGAAGP) are Periplasmic-facing. Residues 20 to 37 (IAAIGGAVLTVMVGIKVY) form a helical membrane-spanning segment. The Cytoplasmic portion of the chain corresponds to 38–44 (KWVRRAM).

Belongs to the inovirus capsid protein family. Homomultimerizes. There are several thousands of this protein in the phage capsid.

Its subcellular location is the virion. The protein resides in the host membrane. Self assembles to form a helical capsid wrapping up the viral genomic DNA. The capsid displays a filamentous structure with a length of 760-1950 nm and a width of 6-8 nm. The virion assembly and budding take place at the host inner membrane. The protein is Capsid protein G8P (VIII) of Xanthomonas campestris pv. oryzae (Bacteriophage Xf).